Reading from the N-terminus, the 357-residue chain is 3-isopropylmalate dehydrogenase (357 aa).

76–89 lines the NAD(+) pocket; that stretch reads GPQWDTIDPALRPE. R96, R106, R134, and D224 together coordinate substrate. Positions 224, 248, and 252 each coordinate Mg(2+). 282 to 294 provides a ligand contact to NAD(+); the sequence is GSAPDIAGQGVAN.

It belongs to the isocitrate and isopropylmalate dehydrogenases family. LeuB type 1 subfamily. As to quaternary structure, homodimer. Mg(2+) serves as cofactor. The cofactor is Mn(2+).

It is found in the cytoplasm. The catalysed reaction is (2R,3S)-3-isopropylmalate + NAD(+) = 4-methyl-2-oxopentanoate + CO2 + NADH. It participates in amino-acid biosynthesis; L-leucine biosynthesis; L-leucine from 3-methyl-2-oxobutanoate: step 3/4. Its function is as follows. Catalyzes the oxidation of 3-carboxy-2-hydroxy-4-methylpentanoate (3-isopropylmalate) to 3-carboxy-4-methyl-2-oxopentanoate. The product decarboxylates to 4-methyl-2 oxopentanoate. This Xylella fastidiosa (strain Temecula1 / ATCC 700964) protein is 3-isopropylmalate dehydrogenase.